The chain runs to 486 residues: Protein kinase C and casein kinase substrate in neurons protein 2 (486 aa).

Positions 11–282 (VEVSSDSFWE…SIKAADAVED (272 aa)) constitute an F-BAR domain. The stretch at 25 to 274 (KRTVKRIDDG…TIYRELEQSI (250 aa)) forms a coiled coil. The residue at position 53 (lysine 53) is an N6-acetyllysine. Serine 273 carries the phosphoserine modification. Serine 313 is modified (phosphoserine; by PKC). Residues 315–426 (REKKKAVDGV…NPFDEDTTSG (112 aa)) form a disordered region. The span at 327–362 (TGINQTGDQSGQNKPGSNLSVPSNPAQSTQLQSSYN) shows a compositional bias: polar residues. An NPF1 motif is present at residues 362 to 364 (NPF). Serine 373 carries the phosphoserine; by IKKB modification. Positions 384-396 (NVSSYEKTQTYPT) are enriched in polar residues. The residue at position 399 (serine 399) is a Phosphoserine. Over residues 404–416 (NNPFSSTDANGDS) the composition is skewed to polar residues. The short motif at 405 to 407 (NPF) is the NPF2 element. Residues 417-419 (NPF) carry the NPF3 motif. In terms of domain architecture, SH3 spans 426 to 486 (GTEVRVRALY…YPANYVEAIQ (61 aa)). Phosphoserine is present on serine 446.

Belongs to the PACSIN family. As to quaternary structure, homodimer. May form heterooligomers with other PACSINs. Interacts (via NPF motifs) with EHD1 (via EH domain). Interacts (via NPF motifs) with EHD2 (via EH domain); this interaction probably stabilizes the caveolae. Interacts with EHD3. Interacts (via the SH3 domain) with MICALL1. Interacts with RAC1. Interacts (via SH3 domain) with DNM1, SYN1, SYNJ1 and WASL. Interacts (via F-BAR domain) with CAV1; this interaction induces membrane tubulation. Interacts with TRPV4. Forms a complex with EHD4 and MICALL1; the complex controls CDH5 trafficking and coordinates angiogenesis. In terms of processing, phosphorylated by casein kinase 2 (CK2). Phosphorylation by PKC probably decreases the membrane binding and tubulation capacities of PACSIN2, thereby modulating the lifetime of caveolae. Widely expressed (at protein level).

It localises to the cytoplasm. Its subcellular location is the cytoskeleton. The protein resides in the cytoplasmic vesicle membrane. It is found in the cell projection. The protein localises to the ruffle membrane. It localises to the early endosome. Its subcellular location is the recycling endosome membrane. The protein resides in the cell membrane. It is found in the membrane. The protein localises to the caveola. It localises to the cell junction. Its subcellular location is the adherens junction. In terms of biological role, regulates the morphogenesis and endocytosis of caveolae. Lipid-binding protein that is able to promote the tubulation of the phosphatidic acid-containing membranes it preferentially binds. Plays a role in intracellular vesicle-mediated transport. Involved in the endocytosis of cell-surface receptors like the EGF receptor, contributing to its internalization in the absence of EGF stimulus. Essential for endothelial organization in sprouting angiogenesis, modulates CDH5-based junctions. Facilitates endothelial front-rear polarity during migration by recruiting EHD4 and MICALL1 to asymmetric adherens junctions between leader and follower cells. The protein is Protein kinase C and casein kinase substrate in neurons protein 2 (Pacsin2) of Mus musculus (Mouse).